The primary structure comprises 253 residues: uncharacterized protein (253 aa).

2 consecutive C2HC LYAR-type zinc fingers follow at residues 1–26 (MVFF…FQCR) and 27–51 (NTTF…VKCI). Cys6, Cys9, His21, Cys25, Cys32, Cys35, His47, and Cys50 together coordinate Zn(2+). Residues 136 to 171 (AAEADKMREEAIRKQEETQKMEKAQKEAAAAAKKET) are a coiled coil.

It is found in the nucleus. This is an uncharacterized protein from Caenorhabditis elegans.